Reading from the N-terminus, the 201-residue chain is Large ribosomal subunit protein uL4 (201 aa).

The interval 45–72 (AQKTRAEVTGSGKKPWRQKGTGRARAGS) is disordered.

It belongs to the universal ribosomal protein uL4 family. As to quaternary structure, part of the 50S ribosomal subunit.

In terms of biological role, one of the primary rRNA binding proteins, this protein initially binds near the 5'-end of the 23S rRNA. It is important during the early stages of 50S assembly. It makes multiple contacts with different domains of the 23S rRNA in the assembled 50S subunit and ribosome. Its function is as follows. Forms part of the polypeptide exit tunnel. In Shewanella baltica (strain OS223), this protein is Large ribosomal subunit protein uL4.